Here is a 545-residue protein sequence, read N- to C-terminus: Thermosome subunit beta (545 aa).

Belongs to the TCP-1 chaperonin family. In terms of assembly, forms a Heterooligomeric complex of two stacked eight-membered rings.

Functionally, molecular chaperone; binds unfolded polypeptides in vitro, and has a weak ATPase activity. The polypeptide is Thermosome subunit beta (thsB) (Thermococcus sp. (strain KS-8)).